Consider the following 156-residue polypeptide: Small ribosomal subunit protein uS7 (156 aa).

The protein belongs to the universal ribosomal protein uS7 family. Part of the 30S ribosomal subunit. Contacts proteins S9 and S11.

One of the primary rRNA binding proteins, it binds directly to 16S rRNA where it nucleates assembly of the head domain of the 30S subunit. Is located at the subunit interface close to the decoding center, probably blocks exit of the E-site tRNA. This is Small ribosomal subunit protein uS7 from Solibacter usitatus (strain Ellin6076).